The sequence spans 318 residues: UDP-3-O-acylglucosamine N-acyltransferase 1 (318 aa).

Catalysis depends on His230, which acts as the Proton acceptor.

Belongs to the transferase hexapeptide repeat family. LpxD subfamily. As to quaternary structure, homotrimer.

It catalyses the reaction a UDP-3-O-[(3R)-3-hydroxyacyl]-alpha-D-glucosamine + a (3R)-hydroxyacyl-[ACP] = a UDP-2-N,3-O-bis[(3R)-3-hydroxyacyl]-alpha-D-glucosamine + holo-[ACP] + H(+). Its pathway is bacterial outer membrane biogenesis; LPS lipid A biosynthesis. Its function is as follows. Catalyzes the N-acylation of UDP-3-O-acylglucosamine using 3-hydroxyacyl-ACP as the acyl donor. Is involved in the biosynthesis of lipid A, a phosphorylated glycolipid that anchors the lipopolysaccharide to the outer membrane of the cell. The sequence is that of UDP-3-O-acylglucosamine N-acyltransferase 1 from Sulfurimonas denitrificans (strain ATCC 33889 / DSM 1251) (Thiomicrospira denitrificans (strain ATCC 33889 / DSM 1251)).